A 286-amino-acid chain; its full sequence is ATP synthase gamma chain (286 aa).

It belongs to the ATPase gamma chain family. F-type ATPases have 2 components, CF(1) - the catalytic core - and CF(0) - the membrane proton channel. CF(1) has five subunits: alpha(3), beta(3), gamma(1), delta(1), epsilon(1). CF(0) has three main subunits: a, b and c.

The protein resides in the cell membrane. In terms of biological role, produces ATP from ADP in the presence of a proton gradient across the membrane. The gamma chain is believed to be important in regulating ATPase activity and the flow of protons through the CF(0) complex. This chain is ATP synthase gamma chain, found in Oceanobacillus iheyensis (strain DSM 14371 / CIP 107618 / JCM 11309 / KCTC 3954 / HTE831).